Here is a 252-residue protein sequence, read N- to C-terminus: Small ribosomal subunit protein eS1A (252 aa).

Ala-2 is modified (N-acetylalanine; partial).

It belongs to the eukaryotic ribosomal protein eS1 family. Component of the small ribosomal subunit (SSU). Mature yeast ribosomes consist of a small (40S) and a large (60S) subunit. The 40S small subunit contains 1 molecule of ribosomal RNA (18S rRNA) and at least 33 different proteins. The large 60S subunit contains 3 rRNA molecules (25S, 5.8S and 5S rRNA) and at least 46 different proteins. eS1 interacts directly with uS11 and eS26, which form part of the mRNA exit tunnel.

The protein resides in the cytoplasm. In terms of biological role, component of the ribosome, a large ribonucleoprotein complex responsible for the synthesis of proteins in the cell. The small ribosomal subunit (SSU) binds messenger RNAs (mRNAs) and translates the encoded message by selecting cognate aminoacyl-transfer RNA (tRNA) molecules. The large subunit (LSU) contains the ribosomal catalytic site termed the peptidyl transferase center (PTC), which catalyzes the formation of peptide bonds, thereby polymerizing the amino acids delivered by tRNAs into a polypeptide chain. The nascent polypeptides leave the ribosome through a tunnel in the LSU and interact with protein factors that function in enzymatic processing, targeting, and the membrane insertion of nascent chains at the exit of the ribosomal tunnel. The polypeptide is Small ribosomal subunit protein eS1A (rps101) (Schizosaccharomyces pombe (strain 972 / ATCC 24843) (Fission yeast)).